The sequence spans 430 residues: GTPase Obg (430 aa).

Residues 1 to 158 enclose the Obg domain; the sequence is MFVDQVKISL…LEVTLELKLL (158 aa). Residues 118-145 are disordered; sequence RGGRGGRGNSRFATPRNPAPDFSENGEP. The OBG-type G domain maps to 159–329; it reads ADVGLVGFPS…LLYQIADKLE (171 aa). GTP is bound by residues 165–172, 190–194, 212–215, 282–285, and 310–312; these read GFPSVGKS, FTTIK, DLPG, NKMD, and STI. Mg(2+) is bound by residues Ser-172 and Thr-192. The region spanning 352–430 is the OCT domain; it reads KHTPSADKFT…ILGGEFEFVE (79 aa).

The protein belongs to the TRAFAC class OBG-HflX-like GTPase superfamily. OBG GTPase family. Monomer. It depends on Mg(2+) as a cofactor.

The protein resides in the cytoplasm. Its function is as follows. An essential GTPase which binds GTP, GDP and possibly (p)ppGpp with moderate affinity, with high nucleotide exchange rates and a fairly low GTP hydrolysis rate. Plays a role in control of the cell cycle, stress response, ribosome biogenesis and in those bacteria that undergo differentiation, in morphogenesis control. This is GTPase Obg from Staphylococcus epidermidis (strain ATCC 35984 / DSM 28319 / BCRC 17069 / CCUG 31568 / BM 3577 / RP62A).